The primary structure comprises 428 residues: tRNA(Ile2) 2-agmatinylcytidine synthetase TiaS (428 aa).

The protein belongs to the TiaS family.

Its subcellular location is the cytoplasm. It carries out the reaction cytidine(34) in tRNA(Ile2) + agmatine + ATP + H2O = 2-agmatinylcytidine(34) in tRNA(Ile2) + AMP + 2 phosphate + 2 H(+). In terms of biological role, ATP-dependent agmatine transferase that catalyzes the formation of 2-agmatinylcytidine (agm2C) at the wobble position (C34) of tRNA(Ile2), converting the codon specificity from AUG to AUA. The polypeptide is tRNA(Ile2) 2-agmatinylcytidine synthetase TiaS (Methanosarcina mazei (strain ATCC BAA-159 / DSM 3647 / Goe1 / Go1 / JCM 11833 / OCM 88) (Methanosarcina frisia)).